Here is a 200-residue protein sequence, read N- to C-terminus: Holliday junction branch migration complex subunit RuvA (200 aa).

Residues 1 to 64 are domain I; that stretch reads MLSYLSGTLI…EDALQLYGFI (64 aa). The interval 65 to 143 is domain II; it reads TTEDREVFKL…KLDLKIDIKE (79 aa). A flexible linker region spans residues 144 to 148; that stretch reads TAFRS. Residues 149–200 are domain III; it reads DKQQVRNDAYSALISLGFTKSIAEKAMRAAIAEVPDGSVDDLIRVALRHVQS.

This sequence belongs to the RuvA family. Homotetramer. Forms an RuvA(8)-RuvB(12)-Holliday junction (HJ) complex. HJ DNA is sandwiched between 2 RuvA tetramers; dsDNA enters through RuvA and exits via RuvB. An RuvB hexamer assembles on each DNA strand where it exits the tetramer. Each RuvB hexamer is contacted by two RuvA subunits (via domain III) on 2 adjacent RuvB subunits; this complex drives branch migration. In the full resolvosome a probable DNA-RuvA(4)-RuvB(12)-RuvC(2) complex forms which resolves the HJ.

The protein resides in the cytoplasm. The RuvA-RuvB-RuvC complex processes Holliday junction (HJ) DNA during genetic recombination and DNA repair, while the RuvA-RuvB complex plays an important role in the rescue of blocked DNA replication forks via replication fork reversal (RFR). RuvA specifically binds to HJ cruciform DNA, conferring on it an open structure. The RuvB hexamer acts as an ATP-dependent pump, pulling dsDNA into and through the RuvAB complex. HJ branch migration allows RuvC to scan DNA until it finds its consensus sequence, where it cleaves and resolves the cruciform DNA. This chain is Holliday junction branch migration complex subunit RuvA, found in Chloroherpeton thalassium (strain ATCC 35110 / GB-78).